Reading from the N-terminus, the 276-residue chain is Octanoyltransferase LipM (276 aa).

The 216-residue stretch at 31-246 (GLIPPVIRFY…GFAKSLQIEL (216 aa)) folds into the BPL/LPL catalytic domain. Cys148 serves as the catalytic Acyl-thioester intermediate.

The protein belongs to the octanoyltransferase LipM family. As to quaternary structure, monomer.

The catalysed reaction is octanoyl-[ACP] + L-lysyl-[protein] = N(6)-octanoyl-L-lysyl-[protein] + holo-[ACP] + H(+). Its pathway is protein modification; protein lipoylation via endogenous pathway; protein N(6)-(lipoyl)lysine from octanoyl-[acyl-carrier-protein]. Its function is as follows. Catalyzes the transfer of endogenously produced octanoic acid from octanoyl-acyl-carrier-protein onto the lipoyl domain of GcvH, an intermediate carrier during protein lipoylation. The protein is Octanoyltransferase LipM of Lysinibacillus sphaericus (strain C3-41).